A 211-amino-acid polypeptide reads, in one-letter code: Small ribosomal subunit protein uS3 (211 aa).

The region spanning 38-106 (LRKFIKKAFY…NIELNIIEVK (69 aa)) is the KH type-2 domain.

This sequence belongs to the universal ribosomal protein uS3 family. As to quaternary structure, part of the 30S ribosomal subunit. Forms a tight complex with proteins S10 and S14.

Its function is as follows. Binds the lower part of the 30S subunit head. Binds mRNA in the 70S ribosome, positioning it for translation. This chain is Small ribosomal subunit protein uS3, found in Ehrlichia canis (strain Jake).